Reading from the N-terminus, the 368-residue chain is UPF0284 protein Cyan7425_0342 (368 aa).

It belongs to the UPF0284 family.

In Cyanothece sp. (strain PCC 7425 / ATCC 29141), this protein is UPF0284 protein Cyan7425_0342.